The sequence spans 303 residues: Elongation factor Ts (303 aa).

The segment at T79 to T82 is involved in Mg(2+) ion dislocation from EF-Tu.

The protein belongs to the EF-Ts family.

It is found in the cytoplasm. Functionally, associates with the EF-Tu.GDP complex and induces the exchange of GDP to GTP. It remains bound to the aminoacyl-tRNA.EF-Tu.GTP complex up to the GTP hydrolysis stage on the ribosome. The polypeptide is Elongation factor Ts (Magnetococcus marinus (strain ATCC BAA-1437 / JCM 17883 / MC-1)).